Reading from the N-terminus, the 368-residue chain is MARERRDSKAATFFCLAWALCLALPGFPQHVSGREDRVDWTQEKYSHRPTILNATCILQVTSQTNVNRMWQNDLHPILIERYPGSPGSYAVRQHIKHRLQGLQAGWLVEEDTFQSHTPYGYRTFSNIISTLNPLAKRHLVIACHYDSKYFPPQLDGKVFVGATDSAVPCAMMLELARSLDRQLSFLKQSSLPPKADLSLKLIFFDGEEAFVRWSPSDSLYGSRSLAQKMASTPHPPGARNTYQIQGIDLFVLLDLIGARNPVFPVYFLNTARWFGRLEAIEQNLYDLGLLNNYSSERQYFRSNLRRHPVEDDHIPFLRRGVPILHLIPSPFPRVWHTMEDNEENLDKPTIDNLSKILQVFVLEYLNLG.

The first 33 residues, Met1 to Gly33, serve as a signal peptide directing secretion. Residue Asn53 is glycosylated (N-linked (GlcNAc...) asparagine). A disulfide bond links Cys143 and Cys169. Asp164 lines the Zn(2+) pocket. Glu207 acts as the Proton acceptor in catalysis. A Zn(2+)-binding site is contributed by Glu208. Asp254 acts as the Proton acceptor in catalysis. N-linked (GlcNAc...) asparagine glycosylation occurs at Asn292. Residue His336 participates in Zn(2+) binding. Asn352 carries N-linked (GlcNAc...) asparagine glycosylation.

This sequence belongs to the glutaminyl-peptide cyclotransferase family. In terms of tissue distribution, expressed by the venom gland.

The protein resides in the secreted. The catalysed reaction is N-terminal L-glutaminyl-[peptide] = N-terminal 5-oxo-L-prolyl-[peptide] + NH4(+). Its function is as follows. Responsible for the biosynthesis of pyroglutamyl peptides. Has a bias against acidic and tryptophan residues adjacent to the N-terminal glutaminyl residue and a lack of importance of chain length after the second residue. Also catalyzes N-terminal pyroglutamate formation. In Gloydius blomhoffii (Mamushi), this protein is Glutaminyl-peptide cyclotransferase (QPCT).